The sequence spans 503 residues: Cobyric acid synthase (503 aa).

The region spanning 255–444 (AIDVAVIRCP…MHDLFHNDAF (190 aa)) is the GATase cobBQ-type domain. Cys-337 (nucleophile) is an active-site residue. His-436 is a catalytic residue.

This sequence belongs to the CobB/CobQ family. CobQ subfamily.

It participates in cofactor biosynthesis; adenosylcobalamin biosynthesis. Catalyzes amidations at positions B, D, E, and G on adenosylcobyrinic A,C-diamide. NH(2) groups are provided by glutamine, and one molecule of ATP is hydrogenolyzed for each amidation. In Geobacillus kaustophilus (strain HTA426), this protein is Cobyric acid synthase.